Here is a 335-residue protein sequence, read N- to C-terminus: Pyridoxal 5'-phosphate synthase subunit PdxS (335 aa).

Asp59 provides a ligand contact to D-ribose 5-phosphate. The active-site Schiff-base intermediate with D-ribose 5-phosphate is Lys116. Gly188 serves as a coordination point for D-ribose 5-phosphate. D-glyceraldehyde 3-phosphate is bound at residue Lys200. Residues Gly253 and 274-275 each bind D-ribose 5-phosphate; that span reads GS.

The protein belongs to the PdxS/SNZ family. In the presence of PdxT, forms a dodecamer of heterodimers.

It catalyses the reaction aldehydo-D-ribose 5-phosphate + D-glyceraldehyde 3-phosphate + L-glutamine = pyridoxal 5'-phosphate + L-glutamate + phosphate + 3 H2O + H(+). The protein operates within cofactor biosynthesis; pyridoxal 5'-phosphate biosynthesis. Catalyzes the formation of pyridoxal 5'-phosphate from ribose 5-phosphate (RBP), glyceraldehyde 3-phosphate (G3P) and ammonia. The ammonia is provided by the PdxT subunit. Can also use ribulose 5-phosphate and dihydroxyacetone phosphate as substrates, resulting from enzyme-catalyzed isomerization of RBP and G3P, respectively. In Hyperthermus butylicus (strain DSM 5456 / JCM 9403 / PLM1-5), this protein is Pyridoxal 5'-phosphate synthase subunit PdxS.